The primary structure comprises 131 residues: Small ribosomal subunit protein uS11 (131 aa).

It belongs to the universal ribosomal protein uS11 family. Part of the 30S ribosomal subunit. Interacts with proteins S7 and S18. Binds to IF-3.

Functionally, located on the platform of the 30S subunit, it bridges several disparate RNA helices of the 16S rRNA. Forms part of the Shine-Dalgarno cleft in the 70S ribosome. This Halorhodospira halophila (strain DSM 244 / SL1) (Ectothiorhodospira halophila (strain DSM 244 / SL1)) protein is Small ribosomal subunit protein uS11.